We begin with the raw amino-acid sequence, 248 residues long: ATP synthase subunit a, chloroplastic (248 aa).

The next 5 helical transmembrane spans lie at 38-58, 96-116, 135-155, 200-220, and 221-241; these read QVLL…VLTV, VPFI…GALV, INTT…AGLA, LVVA…VMLL, and GLFT…AYIG.

It belongs to the ATPase A chain family. As to quaternary structure, F-type ATPases have 2 components, CF(1) - the catalytic core - and CF(0) - the membrane proton channel. CF(1) has five subunits: alpha(3), beta(3), gamma(1), delta(1), epsilon(1). CF(0) has four main subunits: a, b, b' and c.

Its subcellular location is the plastid. The protein localises to the chloroplast thylakoid membrane. Its function is as follows. Key component of the proton channel; it plays a direct role in the translocation of protons across the membrane. This is ATP synthase subunit a, chloroplastic from Welwitschia mirabilis (Tree tumbo).